The chain runs to 404 residues: Sorting nexin-5 (404 aa).

Ala-2 carries the post-translational modification N-acetylalanine. Positions Leu-25 to Leu-172 constitute a PX domain. A 1,2-diacyl-sn-glycero-3-phospho-(1D-myo-inositol-4,5-bisphosphate) contacts are provided by residues Ser-40–Lys-46, Phe-99–Lys-105, and Glu-113–Met-116. Residues Asp-169–Val-261 form an interaction with DOCK1 region. The tract at residues Phe-183 to Ser-200 is membrane-binding amphipathic helix. A Phosphoserine modification is found at Ser-193. The region spanning Val-202 to Asn-404 is the BAR domain. Lys-275 bears the N6-acetyllysine mark.

It belongs to the sorting nexin family. Forms heterodimers with BAR domain-containing sorting nexins SNX1 and SNX2; does not homodimerize. The heterodimers are proposed to self-assemble into helical arrays on the membrane to stabilize and expand local membrane curvature underlying endosomal tubule formation. Thought to be a component of the originally described retromer complex (also called SNX-BAR retromer) which is a pentamer containing the heterotrimeric retromer cargo-selective complex (CSC), also described as vacuolar protein sorting subcomplex (VPS), and a heterodimeric membrane-deforming subcomplex formed between SNX1 or SNX2 and SNX5 or SNX6 (also called SNX-BAR subcomplex); the respective CSC and SNX-BAR subcomplexes associate with low affinity. Interacts with SNX1, SNX2, VPS26A, VPS29, VPS35, DCTN1, DOCK1, MIB1, PIP5K1C. Interacts with HGS; increased by PIP5K1C kinase activity and by PtdIns(3P) and/or PtdIns(3,4)P2.

Its subcellular location is the endosome. It is found in the early endosome. The protein resides in the early endosome membrane. The protein localises to the cell membrane. It localises to the cytoplasmic vesicle membrane. Its subcellular location is the cytoplasm. It is found in the cell projection. The protein resides in the phagocytic cup. The protein localises to the ruffle. Involved in several stages of intracellular trafficking. Interacts with membranes containing phosphatidylinositol lipids. Acts in part as component of the retromer membrane-deforming SNX-BAR subcomplex. The SNX-BAR retromer mediates retrograde transport of cargo proteins from endosomes to the trans-Golgi network (TGN) and is involved in endosome-to-plasma membrane transport for cargo protein recycling. The SNX-BAR subcomplex functions to deform the donor membrane into a tubular profile called endosome-to-TGN transport carrier (ETC). Does not have in vitro vesicle-to-membrane remodeling activity. Involved in retrograde transport of lysosomal enzyme receptor IGF2R. May function as link between endosomal transport vesicles and dynactin. Plays a role in the internalization of EGFR after EGF stimulation. Involved in EGFR endosomal sorting and degradation; the function involves PIP5K1C and is retromer-independent. Together with PIP5K1C facilitates HGS interaction with ubiquitinated EGFR, which initiates EGFR sorting to intraluminal vesicles (ILVs) of the multivesicular body for subsequent lysosomal degradation. Involved in E-cadherin sorting and degradation; inhibits PIP5K1C-mediated E-cadherin degradation. Plays a role in macropinocytosis. This is Sorting nexin-5 (SNX5) from Bos taurus (Bovine).